Here is a 140-residue protein sequence, read N- to C-terminus: MKMFKSLSLLPRNVSPFQKCYSTDLISLVGVPRVKITKGQNRYLLVNIHTHGFTKYGRVIVRGADVDNHLTIFDSILEELEPQGICAKILGGGRILNEADSKKMKIYGTSRTFGSADHTRTRNILQSWTTYKDFKISVKN.

Arg42 contributes to the substrate binding site. Residue His69 is the Proton acceptor of the active site. Residue 110 to 112 coordinates substrate; the sequence is SRT.

The protein belongs to the janus family.

Its function is as follows. JanA and janB regulate somatic sex differentiation. This Drosophila orena (Fruit fly) protein is Sex-regulated protein janus-B (janB).